The primary structure comprises 222 residues: Peroxiredoxin (222 aa).

The Thioredoxin domain occupies 2 to 157; the sequence is VVLGQKFPEV…ILRLVEALQT (156 aa). The active-site Cysteine sulfenic acid (-SOH) intermediate is the Cys-44. Residue Arg-120 participates in substrate binding. A disulfide bridge links Cys-211 with Cys-217.

It belongs to the peroxiredoxin family. Prx6 subfamily. As to quaternary structure, homodecamer. Pentamer of dimers that assemble into a ring structure.

The protein localises to the cytoplasm. The catalysed reaction is a hydroperoxide + [thioredoxin]-dithiol = an alcohol + [thioredoxin]-disulfide + H2O. Functionally, thiol-specific peroxidase that catalyzes the reduction of hydrogen peroxide and organic hydroperoxides to water and alcohols, respectively. Plays a role in cell protection against oxidative stress by detoxifying peroxides. The protein is Peroxiredoxin of Nanoarchaeum equitans (strain Kin4-M).